A 212-amino-acid polypeptide reads, in one-letter code: MRPDFHKQELIPVIVQDYQTNQVLMLAYTNEVAFEKMLETGETWFWSRSRQKLWHKGEESGHFQKIKGMRLDCDQDTLLVFVEQIGNACHTGTYSCFYDELIPFDDSDIFSELEKQIIDRKLHPVEKSYTNYLLGEGIDKVLKKVGEEASEVIIASKNSDKGELLGEIDDLLYHLFVLMNQQGISLEEVRQKAKERHQLEGNKKEFHTRTAD.

The segment at 1–109 (MRPDFHKQEL…ELIPFDDSDI (109 aa)) is phosphoribosyl-AMP cyclohydrolase. Residues 110 to 212 (FSELEKQIID…KKEFHTRTAD (103 aa)) form a phosphoribosyl-ATP pyrophosphohydrolase region.

The protein in the N-terminal section; belongs to the PRA-CH family. In the C-terminal section; belongs to the PRA-PH family.

Its subcellular location is the cytoplasm. The catalysed reaction is 1-(5-phospho-beta-D-ribosyl)-ATP + H2O = 1-(5-phospho-beta-D-ribosyl)-5'-AMP + diphosphate + H(+). It carries out the reaction 1-(5-phospho-beta-D-ribosyl)-5'-AMP + H2O = 1-(5-phospho-beta-D-ribosyl)-5-[(5-phospho-beta-D-ribosylamino)methylideneamino]imidazole-4-carboxamide. It participates in amino-acid biosynthesis; L-histidine biosynthesis; L-histidine from 5-phospho-alpha-D-ribose 1-diphosphate: step 2/9. The protein operates within amino-acid biosynthesis; L-histidine biosynthesis; L-histidine from 5-phospho-alpha-D-ribose 1-diphosphate: step 3/9. The protein is Histidine biosynthesis bifunctional protein HisIE (hisI) of Lactococcus lactis subsp. lactis (strain IL1403) (Streptococcus lactis).